A 185-amino-acid chain; its full sequence is Photosystem I assembly protein Ycf4 (185 aa).

The next 2 helical transmembrane spans lie at 22-42 (FFFA…GFSS) and 57-77 (IIFV…LFFS).

It belongs to the Ycf4 family.

The protein localises to the plastid. It localises to the chloroplast thylakoid membrane. In terms of biological role, seems to be required for the assembly of the photosystem I complex. The protein is Photosystem I assembly protein Ycf4 of Welwitschia mirabilis (Tree tumbo).